Consider the following 412-residue polypeptide: Transcription factor NIGT1 (412 aa).

Disordered stretches follow at residues 54 to 241 (MDAA…RCWA), 286 to 310 (KYRLHTRRPSSTGQSSAAAGVPAPP), and 358 to 412 (AMLP…TTSA). The span at 90–112 (ESTHADAAKSGKKEEAETSERHS) shows a compositional bias: basic and acidic residues. Low complexity predominate over residues 183–193 (ASSTTAAASST). The segment covering 198–228 (SGDKPTDDDTEKHMETDKDNDKDAKDKDKEG) has biased composition (basic and acidic residues). Residues 232 to 292 (PHRKPRRCWA…HLQKYRLHTR (61 aa)) enclose the HTH myb-type domain. The segment at residues 263 to 288 (PKQIRELMKVDGLTNDEVKSHLQKYR) is a DNA-binding region (H-T-H motif). Over residues 383–392 (SGSEGRRSGD) the composition is skewed to basic and acidic residues. The segment covering 395 to 412 (DGSSSSPAVSSSSQTTSA) has biased composition (low complexity).

The protein localises to the nucleus. Transcriptional repressor that may play a role in response to nitrogen. May be involved in a time-dependent signaling for transcriptional regulation of nitrate-responsive genes. Binds specifically to the DNA sequence motif 5'-GAATC-3' or 5'-GAATATTC-3'. Represses the activity of its own promoter trough binding to these motifs. This chain is Transcription factor NIGT1, found in Oryza sativa subsp. japonica (Rice).